A 232-amino-acid polypeptide reads, in one-letter code: Large ribosomal subunit protein uL1 (232 aa).

This sequence belongs to the universal ribosomal protein uL1 family. As to quaternary structure, part of the 50S ribosomal subunit.

Binds directly to 23S rRNA. The L1 stalk is quite mobile in the ribosome, and is involved in E site tRNA release. Its function is as follows. Protein L1 is also a translational repressor protein, it controls the translation of the L11 operon by binding to its mRNA. In Methylobacterium radiotolerans (strain ATCC 27329 / DSM 1819 / JCM 2831 / NBRC 15690 / NCIMB 10815 / 0-1), this protein is Large ribosomal subunit protein uL1.